The following is a 160-amino-acid chain: uncharacterized protein (160 aa).

The signal sequence occupies residues 1–18 (MELLSLAILSSFFAVANQ).

This is an uncharacterized protein from Caenorhabditis elegans.